A 151-amino-acid polypeptide reads, in one-letter code: Large ribosomal subunit protein bL9 (151 aa).

It belongs to the bacterial ribosomal protein bL9 family.

In terms of biological role, binds to the 23S rRNA. The protein is Large ribosomal subunit protein bL9 of Prochlorococcus marinus (strain AS9601).